A 145-amino-acid polypeptide reads, in one-letter code: D-aminoacyl-tRNA deacylase (145 aa).

A Gly-cisPro motif, important for rejection of L-amino acids motif is present at residues 137–138 (GP).

The protein belongs to the DTD family. As to quaternary structure, homodimer.

Its subcellular location is the cytoplasm. It carries out the reaction glycyl-tRNA(Ala) + H2O = tRNA(Ala) + glycine + H(+). The catalysed reaction is a D-aminoacyl-tRNA + H2O = a tRNA + a D-alpha-amino acid + H(+). In terms of biological role, an aminoacyl-tRNA editing enzyme that deacylates mischarged D-aminoacyl-tRNAs. Also deacylates mischarged glycyl-tRNA(Ala), protecting cells against glycine mischarging by AlaRS. Acts via tRNA-based rather than protein-based catalysis; rejects L-amino acids rather than detecting D-amino acids in the active site. By recycling D-aminoacyl-tRNA to D-amino acids and free tRNA molecules, this enzyme counteracts the toxicity associated with the formation of D-aminoacyl-tRNA entities in vivo and helps enforce protein L-homochirality. This Shigella dysenteriae serotype 1 (strain Sd197) protein is D-aminoacyl-tRNA deacylase.